The following is a 156-amino-acid chain: Ribosomal RNA large subunit methyltransferase H (156 aa).

S-adenosyl-L-methionine-binding positions include L73, G104, and 123 to 128 (VSSLTL).

This sequence belongs to the RNA methyltransferase RlmH family. Homodimer.

Its subcellular location is the cytoplasm. The enzyme catalyses pseudouridine(1915) in 23S rRNA + S-adenosyl-L-methionine = N(3)-methylpseudouridine(1915) in 23S rRNA + S-adenosyl-L-homocysteine + H(+). Functionally, specifically methylates the pseudouridine at position 1915 (m3Psi1915) in 23S rRNA. The polypeptide is Ribosomal RNA large subunit methyltransferase H (Paraburkholderia phymatum (strain DSM 17167 / CIP 108236 / LMG 21445 / STM815) (Burkholderia phymatum)).